A 282-amino-acid polypeptide reads, in one-letter code: 2-dehydro-3-deoxyphosphooctonate aldolase (282 aa).

Belongs to the KdsA family.

Its subcellular location is the cytoplasm. The enzyme catalyses D-arabinose 5-phosphate + phosphoenolpyruvate + H2O = 3-deoxy-alpha-D-manno-2-octulosonate-8-phosphate + phosphate. Its pathway is carbohydrate biosynthesis; 3-deoxy-D-manno-octulosonate biosynthesis; 3-deoxy-D-manno-octulosonate from D-ribulose 5-phosphate: step 2/3. The protein operates within bacterial outer membrane biogenesis; lipopolysaccharide biosynthesis. In Bordetella avium (strain 197N), this protein is 2-dehydro-3-deoxyphosphooctonate aldolase.